The primary structure comprises 179 residues: Large ribosomal subunit protein uL6 (179 aa).

This sequence belongs to the universal ribosomal protein uL6 family. In terms of assembly, part of the 50S ribosomal subunit.

Functionally, this protein binds to the 23S rRNA, and is important in its secondary structure. It is located near the subunit interface in the base of the L7/L12 stalk, and near the tRNA binding site of the peptidyltransferase center. The polypeptide is Large ribosomal subunit protein uL6 (Mycobacterium leprae (strain Br4923)).